Here is a 405-residue protein sequence, read N- to C-terminus: Glucose-1-phosphate adenylyltransferase 1 (405 aa).

Residues Tyr96, Gly161, 176–177 (EK), and Ser194 contribute to the alpha-D-glucose 1-phosphate site.

It belongs to the bacterial/plant glucose-1-phosphate adenylyltransferase family. In terms of assembly, homotetramer.

It catalyses the reaction alpha-D-glucose 1-phosphate + ATP + H(+) = ADP-alpha-D-glucose + diphosphate. Its pathway is glycan biosynthesis; glycogen biosynthesis. Involved in the biosynthesis of ADP-glucose, a building block required for the elongation reactions to produce glycogen. Catalyzes the reaction between ATP and alpha-D-glucose 1-phosphate (G1P) to produce pyrophosphate and ADP-Glc. The sequence is that of Glucose-1-phosphate adenylyltransferase 1 from Vibrio vulnificus (strain CMCP6).